We begin with the raw amino-acid sequence, 310 residues long: N-acetyl-gamma-glutamyl-phosphate reductase (310 aa).

The active site involves cysteine 117.

This sequence belongs to the NAGSA dehydrogenase family. Type 2 subfamily.

The protein localises to the cytoplasm. It catalyses the reaction N-acetyl-L-glutamate 5-semialdehyde + phosphate + NADP(+) = N-acetyl-L-glutamyl 5-phosphate + NADPH + H(+). Its pathway is amino-acid biosynthesis; L-arginine biosynthesis; N(2)-acetyl-L-ornithine from L-glutamate: step 3/4. In terms of biological role, catalyzes the NADPH-dependent reduction of N-acetyl-5-glutamyl phosphate to yield N-acetyl-L-glutamate 5-semialdehyde. This chain is N-acetyl-gamma-glutamyl-phosphate reductase, found in Sinorhizobium medicae (strain WSM419) (Ensifer medicae).